Here is a 455-residue protein sequence, read N- to C-terminus: Probable pectate lyase 6 (455 aa).

Positions 1–25 (MVNLGSYVFVFVALSLTVVVPSVQA) are cleaved as a signal peptide. Asparagine 55 and asparagine 75 each carry an N-linked (GlcNAc...) asparagine glycan. Residues aspartate 247, aspartate 271, and aspartate 275 each contribute to the Ca(2+) site. The active site involves arginine 327.

This sequence belongs to the polysaccharide lyase 1 family. Ca(2+) serves as cofactor.

The catalysed reaction is Eliminative cleavage of (1-&gt;4)-alpha-D-galacturonan to give oligosaccharides with 4-deoxy-alpha-D-galact-4-enuronosyl groups at their non-reducing ends.. Its pathway is glycan metabolism; pectin degradation; 2-dehydro-3-deoxy-D-gluconate from pectin: step 2/5. The sequence is that of Probable pectate lyase 6 from Arabidopsis thaliana (Mouse-ear cress).